The primary structure comprises 156 residues: uncharacterized protein (156 aa).

Helical transmembrane passes span 21–41 (GVLFSSFALLFMFFNSLAISL), 54–74 (TICSSLIPCRTLIFSLWIDFA), and 80–100 (SVLVCCFSASLPLVFFFWALF).

It is found in the membrane. This is an uncharacterized protein from Saccharomyces cerevisiae (strain ATCC 204508 / S288c) (Baker's yeast).